Here is a 318-residue protein sequence, read N- to C-terminus: Ribose-phosphate pyrophosphokinase 1 (318 aa).

96–101 (RQDKKD) is a binding site for ATP. Positions 128, 130, 139, and 143 each coordinate Mg(2+). H130 lines the ATP pocket. Residues 212–227 (KDRVAILVDDMADTCG) form a binding of phosphoribosylpyrophosphate region.

This sequence belongs to the ribose-phosphate pyrophosphokinase family. In terms of assembly, homodimer. The active form is probably a hexamer composed of 3 homodimers. Requires Mg(2+) as cofactor.

The catalysed reaction is D-ribose 5-phosphate + ATP = 5-phospho-alpha-D-ribose 1-diphosphate + AMP + H(+). It functions in the pathway metabolic intermediate biosynthesis; 5-phospho-alpha-D-ribose 1-diphosphate biosynthesis; 5-phospho-alpha-D-ribose 1-diphosphate from D-ribose 5-phosphate (route I): step 1/1. Activated by magnesium and inorganic phosphate. Its function is as follows. Catalyzes the synthesis of phosphoribosylpyrophosphate (PRPP) that is essential for nucleotide synthesis. The chain is Ribose-phosphate pyrophosphokinase 1 (PRPS1) from Macaca fascicularis (Crab-eating macaque).